We begin with the raw amino-acid sequence, 762 residues long: Putative BTB/POZ domain-containing protein L272 (762 aa).

The 71-residue stretch at T16–N86 folds into the BTB domain. Positions D390–N410 are enriched in acidic residues. Disordered stretches follow at residues D390 to D411 and I532 to N556. Low complexity predominate over residues I532–D543. Residues F737–N762 are a coiled coil.

The protein belongs to the mimivirus BTB/WD family.

In Acanthamoeba polyphaga (Amoeba), this protein is Putative BTB/POZ domain-containing protein L272.